A 468-amino-acid chain; its full sequence is BTB and MATH domain-containing protein 45 (468 aa).

Positions 7 to 124 constitute an MATH domain; it reads VFELSHVFKD…DDSIIIEVLV (118 aa). BTB domains are found at residues 148–215 and 304–368; these read SDGI…IDDD and SDVI…IDDL.

The polypeptide is BTB and MATH domain-containing protein 45 (bath-45) (Caenorhabditis elegans).